The chain runs to 997 residues: Glutamate [NMDA] receptor subunit 1 (997 aa).

Residues 1–26 (MAVAGFVFCRPLFGLAIVLLVAPIDA) form the signal peptide. At 27 to 573 (AQRHTASDNP…TLVSFLQPFS (547 aa)) the chain is on the extracellular side. 7 N-linked (GlcNAc...) asparagine glycosylation sites follow: asparagine 258, asparagine 314, asparagine 345, asparagine 397, asparagine 454, asparagine 481, and asparagine 501. Glycine contacts are provided by residues 530 to 532 (PLT) and arginine 537. Residues 574–594 (NTLWILVMVSVHVVALVLYLL) traverse the membrane as a helical segment. The Cytoplasmic portion of the chain corresponds to 595 to 651 (DRFSPFGRFKLSHSDSNEEKALNLSSAVWFAWGVLLNSGIGEGTPRSFSARVLGMVW). The helical transmembrane segment at 652-672 (AGFAMIIVASYTANLAAFLVL) threads the bilayer. The Extracellular portion of the chain corresponds to 673 to 831 (ERPKTKLSGI…KTPNTLGLKN (159 aa)). An N-linked (GlcNAc...) asparagine glycan is attached at asparagine 693. Positions 703 and 747 each coordinate glycine. Residues 832-852 (MAGVFILVGVGIAGGVGLIII) form a helical membrane-spanning segment. The Cytoplasmic segment spans residues 853–997 (EVIYKKHQVK…YTSDVSHLVV (145 aa)). Residues 970–997 (LGKTRPQQSVLPPRYSPGYTSDVSHLVV) are disordered. Over residues 987-997 (GYTSDVSHLVV) the composition is skewed to polar residues.

The protein belongs to the glutamate-gated ion channel (TC 1.A.10.1) family. As to quaternary structure, forms a heteromeric NMDA channel with Nmdar2.

It is found in the cell membrane. Its subcellular location is the postsynaptic cell membrane. It localises to the postsynaptic density. Its function is as follows. NMDA receptor subtype of glutamate-gated ion channels with high calcium permeability and voltage-dependent sensitivity to magnesium. Mediated by glycine. This protein plays a key role in synaptic plasticity, synaptogenesis, excitotoxicity, memory acquisition and learning. It mediates neuronal functions in glutamate neurotransmission. Is involved in the cell surface targeting of NMDA receptors. Plays a role in associative learning and in long-term memory consolidation. The sequence is that of Glutamate [NMDA] receptor subunit 1 from Drosophila sechellia (Fruit fly).